The sequence spans 298 residues: Olfactory receptor 5AK3 (298 aa).

Residues 1–25 (MGRGNSTEVTEFHLLGFGVQHEFQH) lie on the Extracellular side of the membrane. Asn-5 carries N-linked (GlcNAc...) asparagine glycosylation. The chain crosses the membrane as a helical span at residues 26 to 46 (VLFIVLLLIYVTSLIGNIGMI). Residues 47 to 54 (LLIKTDSR) lie on the Cytoplasmic side of the membrane. A helical membrane pass occupies residues 55-75 (LQTPMYFFPQHLAFVDICYTS). Over 76–99 (AITPKMLQSFTEENNLITFRGCVI) the chain is Extracellular. Cysteines 97 and 189 form a disulfide. The chain crosses the membrane as a helical span at residues 100 to 120 (QFLVYATFATSDCYLLAIMAM). The Cytoplasmic portion of the chain corresponds to 121–133 (DCYVAICKPLRYP). A helical membrane pass occupies residues 134-154 (MIMSQTVYIQLVAGSYIIGSI). Asn-155 carries an N-linked (GlcNAc...) asparagine glycan. The Extracellular portion of the chain corresponds to 155 to 196 (NASVHTGFTFSLSFCKSNKINHFFCDGLPILALSCSNIDINI). Residues 197–217 (ILDVVFVGFDLMFTELVIIFS) form a helical membrane-spanning segment. At 218–237 (YIYIMVTILKMSSTAGRKKS) the chain is on the cytoplasmic side. A helical transmembrane segment spans residues 238–258 (FSTCASHLTAVTIFYGTLSYM). Topologically, residues 259–271 (YLQPQSNNSQENM) are extracellular. Asn-265 carries N-linked (GlcNAc...) asparagine glycosylation. Residues 272 to 292 (KVASIFYGTVIPMLNPLIYSL) traverse the membrane as a helical segment. Over 293 to 298 (RNKEGK) the chain is Cytoplasmic.

This sequence belongs to the G-protein coupled receptor 1 family.

It localises to the cell membrane. In terms of biological role, odorant receptor. The sequence is that of Olfactory receptor 5AK3 (OR5AK3P) from Homo sapiens (Human).